The chain runs to 79 residues: Large ribosomal subunit protein uL24 (79 aa).

The tract at residues 1–29 is disordered; that stretch reads MPKLKKLLLKVSTSKPNTNPPSQNEEKGT. Over residues 11–23 the composition is skewed to polar residues; sequence VSTSKPNTNPPSQ.

The protein belongs to the universal ribosomal protein uL24 family. As to quaternary structure, part of the 50S ribosomal subunit.

In terms of biological role, one of two assembly initiator proteins, it binds directly to the 5'-end of the 23S rRNA, where it nucleates assembly of the 50S subunit. Its function is as follows. One of the proteins that surrounds the polypeptide exit tunnel on the outside of the subunit. This Onion yellows phytoplasma (strain OY-M) protein is Large ribosomal subunit protein uL24 (rplX).